The following is a 187-amino-acid chain: ATP synthase subunit b 2 (187 aa).

Residues 1–25 are disordered; the sequence is MAESHGGAKGPAAGAHTGAEGGHGG. The chain crosses the membrane as a helical span at residues 39–59; it reads LVSLAIFFVVLYVIVSKLALP. Residues 103-122 are disordered; the sequence is RAQAIGNESRDKANAQAETE. Positions 110-122 are enriched in basic and acidic residues; that stretch reads ESRDKANAQAETE.

It belongs to the ATPase B chain family. F-type ATPases have 2 components, F(1) - the catalytic core - and F(0) - the membrane proton channel. F(1) has five subunits: alpha(3), beta(3), gamma(1), delta(1), epsilon(1). F(0) has three main subunits: a(1), b(2) and c(10-14). The alpha and beta chains form an alternating ring which encloses part of the gamma chain. F(1) is attached to F(0) by a central stalk formed by the gamma and epsilon chains, while a peripheral stalk is formed by the delta and b chains.

It is found in the cell inner membrane. In terms of biological role, f(1)F(0) ATP synthase produces ATP from ADP in the presence of a proton or sodium gradient. F-type ATPases consist of two structural domains, F(1) containing the extramembraneous catalytic core and F(0) containing the membrane proton channel, linked together by a central stalk and a peripheral stalk. During catalysis, ATP synthesis in the catalytic domain of F(1) is coupled via a rotary mechanism of the central stalk subunits to proton translocation. Functionally, component of the F(0) channel, it forms part of the peripheral stalk, linking F(1) to F(0). The b'-subunit is a diverged and duplicated form of b found in plants and photosynthetic bacteria. This Bradyrhizobium diazoefficiens (strain JCM 10833 / BCRC 13528 / IAM 13628 / NBRC 14792 / USDA 110) protein is ATP synthase subunit b 2 (atpF2).